The chain runs to 477 residues: Putative WAS protein family homolog 4 (477 aa).

Residues methionine 1–isoleucine 180 are WHD1. Disordered stretches follow at residues glutamine 310–histidine 420 and lysine 434–serine 477. Over residues threonine 315 to proline 327 the composition is skewed to pro residues. The interval glutamine 362–serine 477 is VCA. One can recognise a WH2 domain in the interval glycine 374–methionine 396. Residues serine 395–glutamine 411 show a composition bias toward basic and acidic residues. Residues serine 437–glycine 449 show a composition bias toward gly residues.

The protein belongs to the WASH1 family. Interacts (via WHD1 region) with WASHC2C; the interaction is direct.

The protein localises to the early endosome membrane. It is found in the recycling endosome membrane. Functionally, may act as a nucleation-promoting factor at the surface of endosomes, where it recruits and activates the Arp2/3 complex to induce actin polymerization, playing a key role in the fission of tubules that serve as transport intermediates during endosome sorting. The polypeptide is Putative WAS protein family homolog 4 (WASH4P) (Homo sapiens (Human)).